The sequence spans 374 residues: MTVSHGGILEGSSRGGKMMDWLKNKKAISPILALLIVLGVTIVVGAVFYAWGSNLFGNSQEKTQAAVEGTATNMFYDAGAIRVAATCIDKIRYQDADDSDSWLGYPNGNGKIAKPSTSNGCYNSTYGTVFYDERFIVEIPVTIDTQDYKLTGVKVVGGIPKIVDMGGTYTNAFEDISAKFYAFWLHLNDNYQLLKKDGTLFVGYVNKSGMFEVSNGYVIAWNQTRDTYGKLASSVGATSDSSWDAVNTTTGVAPLVETSWPYYGTYCSNVKLYTATGEELKPGFGSGTLVAQWFCSSATYLDKLFNNPEYVVGTLPKNSEKTVKTYLFFNTLYLPNYKGSTNDGYVTFEVPLKVVSNEGVTKEVKVKFTVYDDE.

Residues 27 to 49 form a helical membrane-spanning segment; that stretch reads AISPILALLIVLGVTIVVGAVFY.

Its subcellular location is the membrane. This is an uncharacterized protein from Methanocaldococcus jannaschii (strain ATCC 43067 / DSM 2661 / JAL-1 / JCM 10045 / NBRC 100440) (Methanococcus jannaschii).